The primary structure comprises 319 residues: Putative binding protein BAB2_1146 (319 aa).

Positions M1–A22 are cleaved as a signal peptide.

It belongs to the bacterial solute-binding protein SsuA/TauA family. In terms of assembly, the complex is composed of two ATP-binding proteins (BAB2_1147), two transmembrane proteins (BAB2_1148) and a solute-binding protein (BAB2_1146).

It localises to the periplasm. Probably part of an ABC transporter complex. The polypeptide is Putative binding protein BAB2_1146 (Brucella abortus (strain 2308)).